A 139-amino-acid chain; its full sequence is ATP synthase epsilon chain (139 aa).

Belongs to the ATPase epsilon chain family. As to quaternary structure, F-type ATPases have 2 components, CF(1) - the catalytic core - and CF(0) - the membrane proton channel. CF(1) has five subunits: alpha(3), beta(3), gamma(1), delta(1), epsilon(1). CF(0) has three main subunits: a, b and c.

The protein localises to the cell inner membrane. Functionally, produces ATP from ADP in the presence of a proton gradient across the membrane. The protein is ATP synthase epsilon chain of Acinetobacter baumannii (strain SDF).